Consider the following 290-residue polypeptide: MFKGSIVAIVTPFNNGQVDFEKLRELVEFQISNGTDAIVPCGTTGEASTLDYDEHMDVVKTVIEQVNKRVPVIAGTGSNSTAEAIELSQKAKEVGADGVLLVTPYYNKPTQEGLVRHYTAIADAVAIPQILYNVPGRTGVNMLPETVARLAPHKNIVAIKEATGSLQQASEILALCGDKIDVLCGDDFITFPMMACGAKGVISVLANIMPKTVAELTDAFYAGDMEKARQLHLQTLKIGNAMFIESNPIPVKTALGLMGKCSDEVRLPLCPMGAANKEKLAAIMKEYELI.

Threonine 44 contacts pyruvate. The Proton donor/acceptor role is filled by tyrosine 132. Catalysis depends on lysine 160, which acts as the Schiff-base intermediate with substrate. Residue isoleucine 202 participates in pyruvate binding.

It belongs to the DapA family. Homotetramer; dimer of dimers.

It localises to the cytoplasm. It catalyses the reaction L-aspartate 4-semialdehyde + pyruvate = (2S,4S)-4-hydroxy-2,3,4,5-tetrahydrodipicolinate + H2O + H(+). It functions in the pathway amino-acid biosynthesis; L-lysine biosynthesis via DAP pathway; (S)-tetrahydrodipicolinate from L-aspartate: step 3/4. Catalyzes the condensation of (S)-aspartate-beta-semialdehyde [(S)-ASA] and pyruvate to 4-hydroxy-tetrahydrodipicolinate (HTPA). This chain is 4-hydroxy-tetrahydrodipicolinate synthase, found in Geobacter metallireducens (strain ATCC 53774 / DSM 7210 / GS-15).